We begin with the raw amino-acid sequence, 175 residues long: Alpha-crystallin B chain (175 aa).

Residue M1 is modified to N-acetylmethionine. Phosphoserine occurs at positions 19, 45, and 59. One can recognise a sHSP domain in the interval R56–E164. Zn(2+) is bound at residue H83. K92 is modified (N6-acetyllysine). The Zn(2+) site is built by H104, E106, H111, and H119. A disordered region spans residues V145–K175. K166 is modified (N6-acetyllysine). Residue T170 is glycosylated (O-linked (GlcNAc) threonine).

The protein belongs to the small heat shock protein (HSP20) family. In terms of assembly, heteromer composed of three CRYAA and one CRYAB subunits. Aggregates with homologous proteins, including the small heat shock protein HSPB1, to form large heteromeric complexes. Inter-subunit bridging via zinc ions enhances stability, which is crucial as there is no protein turn over in the lens. Interacts with HSPBAP1 and TTN/titin. Interacts with TMEM109; in the cellular response to DNA damage. Interacts with DES; binds rapidly during early stages of DES filament assembly and a reduced binding seen in the later stages. Interacts with TMED10; the interaction mediates the translocation from the cytoplasm into the ERGIC (endoplasmic reticulum-Golgi intermediate compartment) and thereby secretion. Interacts with ATP6V1A and with MTOR, forming a ternary complex. In terms of tissue distribution, lens as well as other tissues.

The protein resides in the cytoplasm. Its subcellular location is the nucleus. The protein localises to the secreted. It is found in the lysosome. May contribute to the transparency and refractive index of the lens. Has chaperone-like activity, preventing aggregation of various proteins under a wide range of stress conditions. In lens epithelial cells, stabilizes the ATP6V1A protein, preventing its degradation by the proteasome. In Mesocricetus auratus (Golden hamster), this protein is Alpha-crystallin B chain (CRYAB).